The sequence spans 337 residues: GTPase Obg (337 aa).

The Obg domain occupies 4–162 (SNFIDYVKVC…AWVILELKVL (159 aa)). The 167-residue stretch at 163–329 (ADVGLVGFPN…LKDLLWTTMN (167 aa)) folds into the OBG-type G domain. GTP-binding positions include 169-176 (GFPNAGKS), 194-198 (FTTLA), 216-219 (DIPG), 283-286 (SKSD), and 310-312 (SSY). Mg(2+) is bound by residues serine 176 and threonine 196.

The protein belongs to the TRAFAC class OBG-HflX-like GTPase superfamily. OBG GTPase family. As to quaternary structure, monomer. Mg(2+) is required as a cofactor.

It localises to the cytoplasm. Its function is as follows. An essential GTPase which binds GTP, GDP and possibly (p)ppGpp with moderate affinity, with high nucleotide exchange rates and a fairly low GTP hydrolysis rate. Plays a role in control of the cell cycle, stress response, ribosome biogenesis and in those bacteria that undergo differentiation, in morphogenesis control. This Cytophaga hutchinsonii (strain ATCC 33406 / DSM 1761 / CIP 103989 / NBRC 15051 / NCIMB 9469 / D465) protein is GTPase Obg.